We begin with the raw amino-acid sequence, 512 residues long: Colistin resistance protein EmrB (512 aa).

The next 14 helical transmembrane spans lie at Trp17–Val37, Val55–Ile75, Val84–Trp104, Ile115–Phe135, Leu144–Trp164, Phe169–Ile189, Ser205–Leu225, Leu234–Phe254, Ile280–Leu300, Val314–Pro334, Thr341–Ile361, Gly376–Leu396, Ile412–His432, and Phe486–Phe506.

It belongs to the major facilitator superfamily. EmrB family.

It localises to the cell inner membrane. Its function is as follows. Probably part of an efflux pump system that contributes to adaptation to osmotic stress and resistance to colistin. The polypeptide is Colistin resistance protein EmrB (Acinetobacter baumannii (strain ATCC 17978 / DSM 105126 / CIP 53.77 / LMG 1025 / NCDC KC755 / 5377)).